Consider the following 1263-residue polypeptide: MSILYVSPHPDAFPSLRALIAARYGEAGDGPGWGGPHPRICLQPPPSSRTPFPPPRLPALEQGPGGLWVWGAPAVAQLLWPAGLGGPGGSRAAVLVQQWVSYADTELIPAACGATLPALGLRGPGQDPQAALGALGKALNPLEDWLRLHTYLAGDAPTLADLAAVTALLLPFRYVLDPSARRIWGNVTRWFNTCVRQPEFRAVLGEVALYSGARSVTQQPGSEVIAPQKTPAQLKKEAKKREKLEKFQQKQKTQQQPPHGEKKPKPEKKEKRDPGVITYDLPTPPGEKKDVSGAMPDSYSPQYVEAAWYPWWERQGFFKPEYGRPSVSAPNPRGVFMMCIPPPNVTGSLHLGHALTNAIQDSLTRWHRMRGETTLWNPGCDHAGIATQVVVEKKLWKERGLNRHQLGREAFLEEVWKWKAEKGDRIYHQLKKLGSSLDWDRACFTMDPKLSATVTEAFVRLHEEGVIYRSTRLVNWSCTLNSAISDIEVDKKELTGRTLLPVPGYKEKVEFGVLVSFAYKVQGSDSDEEVVVATTRIETMLGDVAVAVHPKDPRYQHLKGKCVVHPFLSRSLPIVFDDFVDMEFGTGAVKITPAHDQNDYEVGQRHRLEAISIMDSKGALINVPPPFLGLPRFEARKAVLAALKERGLFRGVKDNPMVVPLCNRSKDVVEPLLRPQWYVRCGEMAQAASAAVTRGDLRILPEAHQRTWHSWMDNIRDWCISRQLWWGHRIPAYFITVHDPAVPPGEDPDGRYWVSGRTEAEAREKAAREFGVSPDKISLQQDEDVLDTWFSSGLFPFSIFGWPNQSEDLSVFYPGTLLETGHDILFFWVARMVMLGLKLTGKLPFREVYLHAIVRDAHGRKMSKSLGNVIDPLDVIHGVSLQGLYDQLLNSNLDPSEVEKAKEGQKADFPAGIPECGTDALRFGLCAYTSQGRDINLDVNRILGYRHFCNKLWNATKFALRGLGKGFVPSATSKPEGHESLVDRWIRSRLTEAVRLSNEGFQAYDFPAITTAQYSFWLYELCDVYLECLKPVLNGVDQVAAECARQTLYTCLDVGLRLLSPFMPFVTEELFQRLPRRTPKAPASLCVTPYPEPSECSWKDPEAEAALELALSITRAVRSLRADYNLTRTRPDCFLEVADEATGALASAVSGYVQALASAGVVAVLALGAPAPQGCAVAVASDRCSIHLQLQGLVDPARELGKLQAKRSEAQRQAQRLQERRAASSYSAKVPLEVQEADEAKLQQTEAELRKVDEAIALFQKML.

The residue at position 2 (S2) is an N-acetylserine. Residues 89–219 enclose the GST C-terminal domain; that stretch reads GSRAAVLVQQ…YSGARSVTQQ (131 aa). The interval 218–294 is disordered; that stretch reads QQPGSEVIAP…PGEKKDVSGA (77 aa). 2 stretches are compositionally biased toward basic and acidic residues: residues 234-248 and 259-274; these read LKKE…EKFQ and HGEK…KRDP. The short motif at 343-353 is the 'HIGH' region element; it reads PNVTGSLHLGH. Phosphoserine is present on residues S436 and S526. Residue K644 is modified to N6-acetyllysine. The 'KMSKS' region motif lies at 861–865; it reads KMSKS. K864 lines the ATP pocket.

It belongs to the class-I aminoacyl-tRNA synthetase family. In terms of assembly, forms high-molecular-mass aggregates with elongation factor 1.

It carries out the reaction tRNA(Val) + L-valine + ATP = L-valyl-tRNA(Val) + AMP + diphosphate. Its activity is regulated as follows. Can be regulated by protein kinase C-dependent phosphorylation. The protein is Valine--tRNA ligase (Vars1) of Mus musculus (Mouse).